The sequence spans 59 residues: UPF0391 membrane protein Geob_0344 (59 aa).

2 helical membrane passes run 4–24 (WAAI…TGIA) and 33–53 (FLFI…ITAG).

Belongs to the UPF0391 family.

The protein resides in the cell membrane. The polypeptide is UPF0391 membrane protein Geob_0344 (Geotalea daltonii (strain DSM 22248 / JCM 15807 / FRC-32) (Geobacter daltonii)).